A 277-amino-acid polypeptide reads, in one-letter code: Large ribosomal subunit protein uL2 (277 aa).

The segment at Met226 to Lys277 is disordered.

This sequence belongs to the universal ribosomal protein uL2 family. In terms of assembly, part of the 50S ribosomal subunit. Forms a bridge to the 30S subunit in the 70S ribosome.

Its function is as follows. One of the primary rRNA binding proteins. Required for association of the 30S and 50S subunits to form the 70S ribosome, for tRNA binding and peptide bond formation. It has been suggested to have peptidyltransferase activity; this is somewhat controversial. Makes several contacts with the 16S rRNA in the 70S ribosome. This Symbiobacterium thermophilum (strain DSM 24528 / JCM 14929 / IAM 14863 / T) protein is Large ribosomal subunit protein uL2.